We begin with the raw amino-acid sequence, 66 residues long: Large ribosomal subunit protein bL35 (66 aa).

Basic residues-rich tracts occupy residues Met1–Lys15 and Ala27–Gln40. The interval Met1–Gln40 is disordered.

The protein belongs to the bacterial ribosomal protein bL35 family.

The protein is Large ribosomal subunit protein bL35 of Rhodopseudomonas palustris (strain BisA53).